Consider the following 647-residue polypeptide: MPDPATYRPAPGSIPVEPGVYRFRDPHGRVIYVGKAKSLRSRLTSYFADIAHLQPRTRQMVTTAAKVEWTVVNTEVEALQLEYNWIKEFDPRFNVRYRDDKSYPVLAVTLNEDFPRLMVYRGPRRKGVRYFGPYSHAWAIRETVDLLTRVFPARTCSMGVFKRHKQIDRPCLLGYIDKCSAPCIGRVSKEQHRQIVDDFCDFLSGKTDRYARELEQQMNAAAENLDFERAARLRDDRSALKRAMEKQAVVLGDGTDADVVAFADDELEAAVQVFHVRGGRVRGQRGWVVEKPSAPDVSVEEQLVEQFLAQFYGDQAELGGAADESVNPVPREVLVPCLPSNADQLSSWLSGLRGSRVTLRVPRRGDKRALAETVQRNAKEALQQHKLKRAGDFNARSAALQNIQEALGLADAPLRIECVDISHVQGTDVVASLVVFEDGLPRKSDYRHFAIREAAGQGRSDDVASIAEVTRRRFQRHLSEQNDPNLLSPEGKSRRFAYPPNLYVVDGGAPQVNAASAVLEELGIVDVAVIGLAKRLEEVWVPSEPDPIIMPRNSEGLYLLQRVRDEAHRFAITYHRSKRSKRMTASALDAVPGLGEHRRKALVTHFGSIARLKEATVDQITAVPGIGVATATAVLEALRPDQPGGAQ.

Residues 16–95 (VEPGVYRFRD…IKEFDPRFNV (80 aa)) enclose the GIY-YIG domain. A UVR domain is found at 208 to 243 (DRYARELEQQMNAAAENLDFERAARLRDDRSALKRA).

It belongs to the UvrC family. As to quaternary structure, interacts with UvrB in an incision complex.

Its subcellular location is the cytoplasm. The UvrABC repair system catalyzes the recognition and processing of DNA lesions. UvrC both incises the 5' and 3' sides of the lesion. The N-terminal half is responsible for the 3' incision and the C-terminal half is responsible for the 5' incision. In Mycobacterium marinum (strain ATCC BAA-535 / M), this protein is UvrABC system protein C.